Reading from the N-terminus, the 699-residue chain is Elongation factor G (699 aa).

The tr-type G domain occupies 8 to 288; the sequence is EDYRNFGIMA…AVVDYLPSPL (281 aa). GTP-binding positions include 17–24, 86–90, and 140–143; these read AHIDAGKT, DTPGH, and NKMD.

It belongs to the TRAFAC class translation factor GTPase superfamily. Classic translation factor GTPase family. EF-G/EF-2 subfamily.

It localises to the cytoplasm. Catalyzes the GTP-dependent ribosomal translocation step during translation elongation. During this step, the ribosome changes from the pre-translocational (PRE) to the post-translocational (POST) state as the newly formed A-site-bound peptidyl-tRNA and P-site-bound deacylated tRNA move to the P and E sites, respectively. Catalyzes the coordinated movement of the two tRNA molecules, the mRNA and conformational changes in the ribosome. The polypeptide is Elongation factor G (Rhizobium rhizogenes (strain K84 / ATCC BAA-868) (Agrobacterium radiobacter)).